A 215-amino-acid chain; its full sequence is MAFALSLPSLPKRYQPAAIWSLYVIGLCPGLWYFYLAATGGLGFNPVKDFEHLLGIWALRFLCLGLLVTPLRDLFNVNLIAYRRALGLIAFYYVLAHFTVYLVLDRGLILGSIAGDILKRPYIMLGMAGLIILIPLALTSNRWSIRRLGSRWNTLHKLVYLVLIVGVLHFVLARKSITLEPVFYISTMVVLLGYRLVRPSIMTMKRNKRARPVRT.

Transmembrane regions (helical) follow at residues 17 to 37 (AAIW…FYLA), 50 to 70 (FEHL…LVTP), 85 to 105 (ALGL…LVLD), 121 to 141 (PYIM…LTSN), 152 to 172 (WNTL…HFVL), and 177 to 197 (ITLE…YRLV).

This sequence belongs to the MsrQ family. As to quaternary structure, heterodimer of a catalytic subunit (MsrP) and a heme-binding subunit (MsrQ). The cofactor is FMN. Requires heme b as cofactor.

The protein resides in the cell inner membrane. Its function is as follows. Part of the MsrPQ system that repairs oxidized periplasmic proteins containing methionine sulfoxide residues (Met-O), using respiratory chain electrons. Thus protects these proteins from oxidative-stress damage caused by reactive species of oxygen and chlorine generated by the host defense mechanisms. MsrPQ is essential for the maintenance of envelope integrity under bleach stress, rescuing a wide series of structurally unrelated periplasmic proteins from methionine oxidation. MsrQ provides electrons for reduction to the reductase catalytic subunit MsrP, using the quinone pool of the respiratory chain. The polypeptide is Protein-methionine-sulfoxide reductase heme-binding subunit MsrQ (Agrobacterium fabrum (strain C58 / ATCC 33970) (Agrobacterium tumefaciens (strain C58))).